A 647-amino-acid polypeptide reads, in one-letter code: DNA polymerase subunit gamma-1 (647 aa).

A disordered region spans residues glutamate 116–glycine 147. Residues glutamine 127–glutamate 137 show a composition bias toward acidic residues.

This sequence belongs to the DNA polymerase type-A family. As to quaternary structure, heterotrimer composed of a catalytic subunit and a homodimer of accessory subunits. Interacts with TTC3. The cofactor is Mg(2+).

Its subcellular location is the mitochondrion. The protein resides in the mitochondrion matrix. It is found in the mitochondrion nucleoid. It carries out the reaction DNA(n) + a 2'-deoxyribonucleoside 5'-triphosphate = DNA(n+1) + diphosphate. In terms of biological role, involved in the replication of mitochondrial DNA. Associates with mitochondrial DNA. This Gallus gallus (Chicken) protein is DNA polymerase subunit gamma-1 (POLG).